A 657-amino-acid chain; its full sequence is PAN2-PAN3 deadenylation complex subunit PAN3 (657 aa).

Disordered stretches follow at residues 1 to 29 (MASAGKPNIDDGRRGTSSPKLKGRDHAKD), 52 to 98 (HDPS…SATI), and 115 to 135 (SRSNAATPQSQPETSTPEWSI). The C3H1-type zinc-finger motif lies at 27 to 55 (AKDTLCRNVTIYGRCRYEDKGCVFNHDPS). The span at 52-67 (HDPSRVNDAQHPERSS) shows a compositional bias: basic and acidic residues. 2 stretches are compositionally biased toward polar residues: residues 75-98 (DSPSFTPSATPLNGSSGLKKSATI) and 115-132 (SRSNAATPQSQPETSTPE). The pseudokinase domain stretch occupies residues 259–521 (QTLPNSQLPT…TIDIFISGIS (263 aa)). ATP is bound by residues Arg-311, 360–367 (DYHPLSKT), and 421–422 (SK). Residues 522–560 (SQLMSTFDSSLHLDDQLISDLSRELENARLVRLLTKLNF) are a coiled coil. Residues 561-657 (INERPEYEHD…QALLKPARRI (97 aa)) are knob domain.

Belongs to the protein kinase superfamily. PAN3 family. Homodimer. Forms a heterotrimer with a catalytic subunit PAN2 to form the poly(A)-nuclease (PAN) deadenylation complex. Interacts (via PAM-2 motif) with poly(A)-binding protein PAB1 (via PABC domain), conferring substrate specificity of the enzyme complex.

The protein localises to the cytoplasm. Functionally, regulatory subunit of the poly(A)-nuclease (PAN) deadenylation complex, one of two cytoplasmic mRNA deadenylases involved in mRNA turnover. PAN specifically shortens poly(A) tails of RNA and the activity is stimulated by poly(A)-binding protein PAB1. PAN deadenylation is followed by rapid degradation of the shortened mRNA tails by the CCR4-NOT complex. Deadenylated mRNAs are then degraded by two alternative mechanisms, namely exosome-mediated 3'-5' exonucleolytic degradation, or deadenylation-dependent mRNA decaping and subsequent 5'-3' exonucleolytic degradation by XRN1. May also be involved in post-transcriptional maturation of mRNA poly(A) tails. PAN3 acts as a positive regulator for PAN activity, recruiting the catalytic subunit PAN2 to mRNA via its interaction with RNA and with PAB1. This Coccidioides immitis (strain RS) (Valley fever fungus) protein is PAN2-PAN3 deadenylation complex subunit PAN3.